Reading from the N-terminus, the 515-residue chain is Putative asparagine synthetase [glutamine-hydrolyzing] 2 (515 aa).

Catalysis depends on C2, which acts as the For GATase activity. Residues 2 to 229 (CGINGIIRFG…ARQNLIFDLD (228 aa)) form the Glutamine amidotransferase type-2 domain. L-glutamine is bound by residues 52 to 56 (RLAIL), 92 to 94 (NGE), and D114. ATP is bound by residues I306 and 378-379 (SG).

This sequence belongs to the asparagine synthetase family.

It carries out the reaction L-aspartate + L-glutamine + ATP + H2O = L-asparagine + L-glutamate + AMP + diphosphate + H(+). Its pathway is amino-acid biosynthesis; L-asparagine biosynthesis; L-asparagine from L-aspartate (L-Gln route): step 1/1. The protein is Putative asparagine synthetase [glutamine-hydrolyzing] 2 of Methanocaldococcus jannaschii (strain ATCC 43067 / DSM 2661 / JAL-1 / JCM 10045 / NBRC 100440) (Methanococcus jannaschii).